We begin with the raw amino-acid sequence, 96 residues long: Co-chaperonin GroES (96 aa).

Belongs to the GroES chaperonin family. Heptamer of 7 subunits arranged in a ring. Interacts with the chaperonin GroEL.

Its subcellular location is the cytoplasm. Together with the chaperonin GroEL, plays an essential role in assisting protein folding. The GroEL-GroES system forms a nano-cage that allows encapsulation of the non-native substrate proteins and provides a physical environment optimized to promote and accelerate protein folding. GroES binds to the apical surface of the GroEL ring, thereby capping the opening of the GroEL channel. The sequence is that of Co-chaperonin GroES from Shewanella baltica (strain OS223).